The following is an 814-amino-acid chain: Transcription factor oryO (814 aa).

Disordered regions lie at residues 1 to 59 (MTAR…PACN) and 699 to 723 (PMDG…SIPP). Polar residues-rich tracts occupy residues 16 to 27 (ANPTVRDQTQQD) and 49 to 59 (QPDNTSSPACN). Residues 58 to 85 (CNQCRTRKIRCDRQQPKCSNCRRADVEC) constitute a DNA-binding region (zn(2)-C6 fungal-type). Over residues 713–723 (PSESELSSIPP) the composition is skewed to low complexity.

The protein resides in the nucleus. Functionally, transcription factor that regulates the expression of the gene cluster that mediates the biosynthesis of oryzines, natural products with an unusual maleidride backbone. This chain is Transcription factor oryO, found in Aspergillus oryzae (strain ATCC 42149 / RIB 40) (Yellow koji mold).